The primary structure comprises 259 residues: Type III pantothenate kinase (259 aa).

ATP is bound at residue D6–V13. A substrate-binding site is contributed by G107 to R110. D109 functions as the Proton acceptor in the catalytic mechanism. D129 serves as a coordination point for K(+). T132 contacts ATP. T184 contributes to the substrate binding site.

It belongs to the type III pantothenate kinase family. Homodimer. It depends on NH4(+) as a cofactor. K(+) is required as a cofactor.

The protein localises to the cytoplasm. It catalyses the reaction (R)-pantothenate + ATP = (R)-4'-phosphopantothenate + ADP + H(+). It participates in cofactor biosynthesis; coenzyme A biosynthesis; CoA from (R)-pantothenate: step 1/5. In terms of biological role, catalyzes the phosphorylation of pantothenate (Pan), the first step in CoA biosynthesis. The sequence is that of Type III pantothenate kinase from Ruegeria pomeroyi (strain ATCC 700808 / DSM 15171 / DSS-3) (Silicibacter pomeroyi).